Reading from the N-terminus, the 438-residue chain is Ribosomal protein uS12 methylthiotransferase RimO (438 aa).

The MTTase N-terminal domain occupies 5 to 116 (PTIAISHLGC…IVQVIQRVEN (112 aa)). Positions 14, 50, 79, 154, 158, and 161 each coordinate [4Fe-4S] cluster. The 230-residue stretch at 140–369 (TTSEGVAYLR…MQIQQPISLQ (230 aa)) folds into the Radical SAM core domain. Residues 372–438 (CACIGDIVDV…IYDLYGEVIN (67 aa)) enclose the TRAM domain.

It belongs to the methylthiotransferase family. RimO subfamily. [4Fe-4S] cluster serves as cofactor.

The protein localises to the cytoplasm. The enzyme catalyses L-aspartate(89)-[ribosomal protein uS12]-hydrogen + (sulfur carrier)-SH + AH2 + 2 S-adenosyl-L-methionine = 3-methylsulfanyl-L-aspartate(89)-[ribosomal protein uS12]-hydrogen + (sulfur carrier)-H + 5'-deoxyadenosine + L-methionine + A + S-adenosyl-L-homocysteine + 2 H(+). Its function is as follows. Catalyzes the methylthiolation of an aspartic acid residue of ribosomal protein uS12. The chain is Ribosomal protein uS12 methylthiotransferase RimO from Gloeothece citriformis (strain PCC 7424) (Cyanothece sp. (strain PCC 7424)).